The chain runs to 137 residues: Small ribosomal subunit protein bS18c (137 aa).

The protein belongs to the bacterial ribosomal protein bS18 family. As to quaternary structure, part of the 30S ribosomal subunit.

It is found in the plastid. It localises to the chloroplast. The sequence is that of Small ribosomal subunit protein bS18c (rps18) from Chlamydomonas reinhardtii (Chlamydomonas smithii).